Here is a 638-residue protein sequence, read N- to C-terminus: Threonine--tRNA ligase (638 aa).

Positions 1 to 61 constitute a TGS domain; that stretch reads MPIITLPDGS…NKDSKVVIIT (61 aa). Residues 242–533 are catalytic; sequence DHRKLGKKHS…LIEQYEAKFP (292 aa). Residues C333, H384, and H510 each coordinate Zn(2+).

The protein belongs to the class-II aminoacyl-tRNA synthetase family. In terms of assembly, homodimer. Zn(2+) serves as cofactor.

Its subcellular location is the cytoplasm. It carries out the reaction tRNA(Thr) + L-threonine + ATP = L-threonyl-tRNA(Thr) + AMP + diphosphate + H(+). In terms of biological role, catalyzes the attachment of threonine to tRNA(Thr) in a two-step reaction: L-threonine is first activated by ATP to form Thr-AMP and then transferred to the acceptor end of tRNA(Thr). Also edits incorrectly charged L-seryl-tRNA(Thr). The polypeptide is Threonine--tRNA ligase (Prochlorococcus marinus (strain AS9601)).